The following is a 169-amino-acid chain: Protein AIG2 B (169 aa).

Position 15–20 (15–20 (YGSFQE)) interacts with substrate. Catalysis depends on E83, which acts as the Proton acceptor.

Belongs to the gamma-glutamylcyclotransferase family. In terms of tissue distribution, expressed in roots, leaves and stems.

In terms of biological role, putative gamma-glutamylcyclotransferase. The chain is Protein AIG2 B from Arabidopsis thaliana (Mouse-ear cress).